Consider the following 429-residue polypeptide: Adenylosuccinate synthetase (429 aa).

GTP contacts are provided by residues 12–18 and 40–42; these read GDEGKGK and GHT. The active-site Proton acceptor is the Asp-13. Residues Asp-13 and Gly-40 each coordinate Mg(2+). IMP contacts are provided by residues 13-16, 38-41, Thr-129, Arg-143, Gln-223, Thr-238, and Arg-302; these read DEGK and NAGH. His-41 acts as the Proton donor in catalysis. 298–304 is a binding site for substrate; that stretch reads VVTGRKR. GTP contacts are provided by residues Arg-304, 330 to 332, and 412 to 414; these read KLD and STS.

The protein belongs to the adenylosuccinate synthetase family. As to quaternary structure, homodimer. Mg(2+) serves as cofactor.

It localises to the cytoplasm. It catalyses the reaction IMP + L-aspartate + GTP = N(6)-(1,2-dicarboxyethyl)-AMP + GDP + phosphate + 2 H(+). It participates in purine metabolism; AMP biosynthesis via de novo pathway; AMP from IMP: step 1/2. Plays an important role in the de novo pathway of purine nucleotide biosynthesis. Catalyzes the first committed step in the biosynthesis of AMP from IMP. This Bartonella tribocorum (strain CIP 105476 / IBS 506) protein is Adenylosuccinate synthetase.